Reading from the N-terminus, the 378-residue chain is Chaperone protein DnaJ (378 aa).

Positions 6–70 (DYYDVLGVSR…QKRQQYDQFG (65 aa)) constitute a J domain. The CR-type zinc-finger motif lies at 137–219 (GKTSEISYSR…CHGKGVKTQK (83 aa)). The Zn(2+) site is built by Cys150, Cys153, Cys167, Cys170, Cys193, Cys196, Cys207, and Cys210. 4 CXXCXGXG motif repeats span residues 150 to 157 (CEVCKGSG), 167 to 174 (CDKCGGSG), 193 to 200 (CDKCAGSG), and 207 to 214 (CHNCHGKG).

Belongs to the DnaJ family. As to quaternary structure, homodimer. Zn(2+) is required as a cofactor.

It localises to the cytoplasm. Participates actively in the response to hyperosmotic and heat shock by preventing the aggregation of stress-denatured proteins and by disaggregating proteins, also in an autonomous, DnaK-independent fashion. Unfolded proteins bind initially to DnaJ; upon interaction with the DnaJ-bound protein, DnaK hydrolyzes its bound ATP, resulting in the formation of a stable complex. GrpE releases ADP from DnaK; ATP binding to DnaK triggers the release of the substrate protein, thus completing the reaction cycle. Several rounds of ATP-dependent interactions between DnaJ, DnaK and GrpE are required for fully efficient folding. Also involved, together with DnaK and GrpE, in the DNA replication of plasmids through activation of initiation proteins. The sequence is that of Chaperone protein DnaJ from Lactobacillus delbrueckii subsp. bulgaricus (strain ATCC BAA-365 / Lb-18).